Reading from the N-terminus, the 200-residue chain is NADH-ubiquinone oxidoreductase 21.3 kDa subunit (200 aa).

A run of 3 helical transmembrane segments spans residues 16–36 (IKSG…MASL), 48–68 (MHVF…GGIY), and 105–125 (FPVI…FAFS).

Complex I is composed of about 40 different subunits.

It localises to the mitochondrion inner membrane. The enzyme catalyses a ubiquinone + NADH + 5 H(+)(in) = a ubiquinol + NAD(+) + 4 H(+)(out). Transfer of electrons from NADH to the respiratory chain. The immediate electron acceptor for the enzyme is believed to be ubiquinone. This chain is NADH-ubiquinone oxidoreductase 21.3 kDa subunit, found in Neurospora crassa (strain ATCC 24698 / 74-OR23-1A / CBS 708.71 / DSM 1257 / FGSC 987).